Here is a 709-residue protein sequence, read N- to C-terminus: Phosphoribosylformylglycinamidine synthase subunit PurL (709 aa).

The active site involves His36. ATP contacts are provided by Tyr39 and Lys80. Glu82 is a Mg(2+) binding site. Substrate-binding positions include 83-86 and Arg105; that span reads SHNH. Catalysis depends on His84, which acts as the Proton acceptor. Asp106 contacts Mg(2+). A substrate-binding site is contributed by Gln226. Asp252 contributes to the Mg(2+) binding site. 294–296 serves as a coordination point for substrate; it reads ETQ. The ATP site is built by Asp470 and Gly507. Ser510 is a binding site for substrate.

It belongs to the FGAMS family. As to quaternary structure, monomer. Part of the FGAM synthase complex composed of 1 PurL, 1 PurQ and 2 PurS subunits.

The protein localises to the cytoplasm. The catalysed reaction is N(2)-formyl-N(1)-(5-phospho-beta-D-ribosyl)glycinamide + L-glutamine + ATP + H2O = 2-formamido-N(1)-(5-O-phospho-beta-D-ribosyl)acetamidine + L-glutamate + ADP + phosphate + H(+). It participates in purine metabolism; IMP biosynthesis via de novo pathway; 5-amino-1-(5-phospho-D-ribosyl)imidazole from N(2)-formyl-N(1)-(5-phospho-D-ribosyl)glycinamide: step 1/2. Functionally, part of the phosphoribosylformylglycinamidine synthase complex involved in the purines biosynthetic pathway. Catalyzes the ATP-dependent conversion of formylglycinamide ribonucleotide (FGAR) and glutamine to yield formylglycinamidine ribonucleotide (FGAM) and glutamate. The FGAM synthase complex is composed of three subunits. PurQ produces an ammonia molecule by converting glutamine to glutamate. PurL transfers the ammonia molecule to FGAR to form FGAM in an ATP-dependent manner. PurS interacts with PurQ and PurL and is thought to assist in the transfer of the ammonia molecule from PurQ to PurL. The protein is Phosphoribosylformylglycinamidine synthase subunit PurL of Saccharolobus islandicus (strain M.16.4 / Kamchatka #3) (Sulfolobus islandicus).